Consider the following 436-residue polypeptide: 3-ketoacyl-CoA thiolase (436 aa).

Residue Cys99 is the Acyl-thioester intermediate of the active site. Active-site proton acceptor residues include His392 and Cys422.

The protein belongs to the thiolase-like superfamily. Thiolase family. As to quaternary structure, heterotetramer of two alpha chains (FadJ) and two beta chains (FadI).

Its subcellular location is the cytoplasm. It catalyses the reaction an acyl-CoA + acetyl-CoA = a 3-oxoacyl-CoA + CoA. It participates in lipid metabolism; fatty acid beta-oxidation. Functionally, catalyzes the final step of fatty acid oxidation in which acetyl-CoA is released and the CoA ester of a fatty acid two carbons shorter is formed. This Serratia proteamaculans (strain 568) protein is 3-ketoacyl-CoA thiolase.